The chain runs to 200 residues: Mediator of RNA polymerase II transcription subunit 22 (200 aa).

A coiled-coil region spans residues 93–122; sequence SVNEAIDQRNQQLRTLQEECDRKLITLRDE. Residues 166–200 are disordered; it reads LSAPLLASPEPSAGPLQVAAPAHSHAGGPGPTEHA.

This sequence belongs to the Mediator complex subunit 22 family. As to quaternary structure, component of the Mediator complex, which is composed of MED1, MED4, MED6, MED7, MED8, MED9, MED10, MED11, MED12, MED13, MED13L, MED14, MED15, MED16, MED17, MED18, MED19, MED20, MED21, MED22, MED23, MED24, MED25, MED26, MED27, MED29, MED30, MED31, CCNC, CDK8 and CDC2L6/CDK11. The MED12, MED13, CCNC and CDK8 subunits form a distinct module termed the CDK8 module. Mediator containing the CDK8 module is less active than Mediator lacking this module in supporting transcriptional activation. Individual preparations of the Mediator complex lacking one or more distinct subunits have been variously termed ARC, CRSP, DRIP, PC2, SMCC and TRAP.

The protein resides in the nucleus. Functionally, component of the Mediator complex, a coactivator involved in the regulated transcription of nearly all RNA polymerase II-dependent genes. Mediator functions as a bridge to convey information from gene-specific regulatory proteins to the basal RNA polymerase II transcription machinery. Mediator is recruited to promoters by direct interactions with regulatory proteins and serves as a scaffold for the assembly of a functional preinitiation complex with RNA polymerase II and the general transcription factors. The chain is Mediator of RNA polymerase II transcription subunit 22 (MED22) from Homo sapiens (Human).